The following is a 220-amino-acid chain: Chloramphenicol acetyltransferase (220 aa).

His187 acts as the Proton acceptor in catalysis.

It belongs to the chloramphenicol acetyltransferase family. Homotrimer.

The enzyme catalyses chloramphenicol + acetyl-CoA = chloramphenicol 3-acetate + CoA. Its function is as follows. This enzyme is an effector of chloramphenicol resistance in bacteria. This is Chloramphenicol acetyltransferase (cat86) from Bacillus pumilus (Bacillus mesentericus).